Reading from the N-terminus, the 322-residue chain is GDSL esterase/lipase At5g03600 (322 aa).

Ser21 (nucleophile) is an active-site residue. Active-site residues include Asp295 and His298.

This sequence belongs to the 'GDSL' lipolytic enzyme family.

In Arabidopsis thaliana (Mouse-ear cress), this protein is GDSL esterase/lipase At5g03600.